The sequence spans 147 residues: Cyclic di-AMP receptor B (147 aa).

Positions 18–78 constitute a CBS domain; that stretch reads MIEADKVAHV…SIFGLERIEF (61 aa). Lys-23, Ala-25, Thr-46, Ala-47, and Arg-131 together coordinate 3',3'-c-di-AMP.

As to quaternary structure, homodimer. Forms a homodimer with a parallel, head-to-head assembly of the monomers. Under conditions of potassium starvation and corresponding low c-di-AMP levels, apo-DarB specifically interacts with the N-terminal region of the RelA. Under the same conditions, apo-DarB also specifically interacts with the C-terminal part of the pyruvate carboxylase.

With respect to regulation, binds c-di-AMP. Binding of c-di-AMP to DarB inhibits the interaction with RelA and PYC. Its function is as follows. Involved in the c-di-AMP-dependent regulation of the bacterial stringent response. Modulates the activities of at least two enzymes under conditions of potassium limitation. Apo-DarB regulates the activity of the GTP pyrophosphokinase RelA by interacting directly with RelA, leading to stimulation of (p)ppGpp synthesis and induction of the stringent response. Apo-DarB also regulates pyruvate carboxylase (PYC) at two levels: directly at the protein level by binding to the enzyme and stimulating the synthesis of oxaloacetate and indirectly, by interaction with RelA, which leads to activation of the stringent response and to the increased expression of the pycA gene. Stimulation of these enzymes by DarB is prevented in the presence of cyclic di-AMP (c-di-AMP). In Bacillus subtilis (strain 168), this protein is Cyclic di-AMP receptor B.